The chain runs to 229 residues: Somatolactin (229 aa).

The first 24 residues, 1-24 (MHLVSVIQRGVWAVLLWPNLLASS), serve as a signal peptide directing secretion. Disulfide bonds link C29-C39, C87-C203, and C220-C228. N-linked (GlcNAc...) asparagine glycans are attached at residues N143 and N175.

This sequence belongs to the somatotropin/prolactin family.

The protein resides in the secreted. This chain is Somatolactin, found in Cyclopterus lumpus (Lumpsucker).